Reading from the N-terminus, the 655-residue chain is p-hydroxybenzoic acid efflux pump subunit AaeB (655 aa).

The next 11 helical transmembrane spans lie at 13 to 33, 38 to 58, 69 to 89, 93 to 113, 121 to 141, 152 to 172, 370 to 390, 407 to 427, 431 to 451, 459 to 479, and 482 to 502; these read FAVKLATAIVLALFVGFHFQL, WAVLTAAIVAAGPAFAAGGEP, LRIIGTFIGCIAGLVIIIAMI, LLMILVCCIWAGFCTWISSLV, WGLAGYTALIIVITIQPEPLL, EIVIGIVCAIMADLLFSPRSI, LFWLWTGWTSGSGAMVMIAVV, FIYGTLAALPLGLLYFLVIIP, QSMLLLCISLAVLGFFLGIEV, MGALASTINIIVLDNPMTFHF, and FLDSALGQIVGCVLAFTVILL.

This sequence belongs to the aromatic acid exporter ArAE (TC 2.A.85) family.

Its subcellular location is the cell inner membrane. Functionally, forms an efflux pump with AaeA. Could function as a metabolic relief valve, allowing to eliminate certain compounds when they accumulate to high levels in the cell. This is p-hydroxybenzoic acid efflux pump subunit AaeB from Escherichia coli O6:K15:H31 (strain 536 / UPEC).